We begin with the raw amino-acid sequence, 288 residues long: ATP synthase gamma chain 1 (288 aa).

The protein belongs to the ATPase gamma chain family. In terms of assembly, F-type ATPases have 2 components, CF(1) - the catalytic core - and CF(0) - the membrane proton channel. CF(1) has five subunits: alpha(3), beta(3), gamma(1), delta(1), epsilon(1). CF(0) has three main subunits: a, b and c.

The protein localises to the cell inner membrane. Functionally, produces ATP from ADP in the presence of a proton gradient across the membrane. The gamma chain is believed to be important in regulating ATPase activity and the flow of protons through the CF(0) complex. The polypeptide is ATP synthase gamma chain 1 (Photobacterium profundum (strain SS9)).